The following is a 285-amino-acid chain: Vesicle-associated membrane protein 725 (285 aa).

Topologically, residues 1–261 (MDRSVVPISL…MWFENMKIKL (261 aa)) are cytoplasmic. In terms of domain architecture, Longin spans 75–179 (FVARGTVILV…SLNREFGSKL (105 aa)). The 61-residue stretch at 195 to 255 (KLAKVKAQVT…TKIRRKMWFE (61 aa)) folds into the v-SNARE coiled-coil homology domain. The chain crosses the membrane as a helical; Anchor for type IV membrane protein span at residues 262–282 (IVLGIIITLILIIILSVCGGF). The Vesicular portion of the chain corresponds to 283 to 285 (KCT).

The protein belongs to the synaptobrevin family. Expressed in flowers, leaves, stems and roots.

Its subcellular location is the cell membrane. It localises to the early endosome membrane. Functionally, involved in the targeting and/or fusion of transport vesicles to their target membrane. The polypeptide is Vesicle-associated membrane protein 725 (Arabidopsis thaliana (Mouse-ear cress)).